The chain runs to 310 residues: Integrin-binding sialoprotein (310 aa).

Residues 1–16 (MKTVLILLSILGMACA) form the signal peptide. S31, S62, S67, S75, S76, S98, and S106 each carry phosphoserine. The segment at 61 to 284 (QSSSDSSEEN…NGDPRGDNYR (224 aa)) is disordered. Residues 62 to 74 (SSSDSSEENGNGD) are compositionally biased toward low complexity. 2 stretches are compositionally biased toward acidic residues: residues 75-87 (SSEE…ETSN) and 96-108 (EDSD…ESEA). N110 carries an N-linked (GlcNAc...) asparagine glycan. T144 carries the phosphothreonine modification. Over residues 152-174 (DESDEEEEEEEEEENEAEVDDNE) the composition is skewed to acidic residues. S154 carries the phosphoserine modification. The span at 175–187 (QGINGTSSNSTEV) shows a compositional bias: polar residues. N178 and N183 each carry an N-linked (GlcNAc...) asparagine glycan. Acidic residues predominate over residues 198 to 208 (NGEEDGEEESV). Residues 209–227 (TEANTEGITVAGETTTSPN) show a composition bias toward polar residues. Phosphoserine is present on S273. The Integrin-binding motif motif lies at 279–281 (RGD). S300 carries the post-translational modification Phosphoserine. Sulfotyrosine occurs at positions 306 and 307.

As to quaternary structure, monomer. Interacts with integrins; the interaction promotes cell adhesion.

Its subcellular location is the secreted. Functionally, binds tightly to hydroxyapatite. Appears to form an integral part of the mineralized matrix. Probably important to cell-matrix interaction. Promotes adhesion and migration of various cells via the alpha-V/beta-3 integrin receptor (ITGAV:ITGB3). The sequence is that of Integrin-binding sialoprotein (IBSP) from Bos taurus (Bovine).